Consider the following 619-residue polypeptide: TBC domain-containing protein C1952.17c (619 aa).

Residues P34–Q387 form the Rab-GAP TBC domain.

It localises to the cytoplasm. Functionally, may act as a GTPase-activating protein for Rab family protein(s). The chain is TBC domain-containing protein C1952.17c from Schizosaccharomyces pombe (strain 972 / ATCC 24843) (Fission yeast).